The sequence spans 79 residues: uncharacterized protein (79 aa).

Residues 1-19 (MKYVALAFVLSLVILQISA) form the signal peptide.

As to expression, nacreous layer of shell (at protein level). Expressed primarily in the mantle with highest level in the mantle pallium and lower level in the mantle edge.

The protein resides in the secreted. This is an uncharacterized protein from Pinctada maxima (Silver-lipped pearl oyster).